Here is a 177-residue protein sequence, read N- to C-terminus: Thymidine kinase (177 aa).

G11–S18 lines the ATP pocket. E83 serves as the catalytic Proton acceptor. F113 is a binding site for substrate. Positions 138 and 141 each coordinate Zn(2+). I157–G161 lines the substrate pocket. Zn(2+) is bound by residues C170 and C173.

Belongs to the thymidine kinase family. Homotetramer. Two molecules of substrate bind to each enzyme tetramer.

It catalyses the reaction thymidine + ATP = dTMP + ADP + H(+). Phosphorylates thymidine and thymidine analogs, such as azidothymidine (AZT). Part of the salvage pathway for pyrimidine deoxyribonucleotide synthesis. This Variola virus (isolate Human/India/Ind3/1967) (VARV) protein is Thymidine kinase (OPG101).